Consider the following 951-residue polypeptide: Leucine-rich repeat-containing G-protein coupled receptor 4 (951 aa).

The first 24 residues, 1 to 24 (MPGPLRLLCFFALGLLGSAGPSGA), serve as a signal peptide directing secretion. The LRRNT domain maps to 25–57 (APPLCAAPCSCDGDRRVDCSGKGLTAVPEGLSA). Over 25–544 (APPLCAAPCS…LLGSWMIRLT (520 aa)) the chain is Extracellular. 2 cysteine pairs are disulfide-bonded: cysteine 29–cysteine 35 and cysteine 33–cysteine 43. LRR repeat units lie at residues 58 to 79 (FTQALDISMNNITQLPEDAFKS), 82 to 103 (FLEELQLAGNDLSFIHPKALSG), 106 to 127 (ELKVLTLQNNQLRTVPSEAIHG), 130 to 151 (ALQSLRLDANHITSVPEDSFEG), 154 to 177 (QLRHLWLDDNSLTEVPVRPLSNLP), 178 to 199 (TLQALTLALNNISSIPDFAFTN), 202 to 223 (SLVVLHLHNNKIKSLSQHCFDG), 226 to 247 (NLETLDLNYNNLDEFPQAIKAL), 249 to 270 (SLKELGFHSNSISVIPDGAFGG), and 273 to 294 (LLRTIHLYDNPLSFVGNSAFHN). N-linked (GlcNAc...) asparagine glycosylation is present at asparagine 68. Residues asparagine 188 and asparagine 199 are each glycosylated (N-linked (GlcNAc...) asparagine). Asparagine 294 and asparagine 314 each carry an N-linked (GlcNAc...) asparagine glycan. 5 LRR repeats span residues 320–341 (HLESLTLTGTKISSIPDDLCQN), 344–365 (MLRTLDLSYNNIRDLPSFNGCR), 366–387 (ALEEISLQRNQISLIKENTFQG), 390–411 (SLRILDLSRNLIREIHSGAFAK), and 414–435 (TITNLDVSFNELTSFPTEGLNG). A disulfide bridge connects residues cysteine 339 and cysteine 364. 2 disulfide bridges follow: cysteine 470–cysteine 522 and cysteine 471–cysteine 476. A glycan (N-linked (GlcNAc...) asparagine) is linked at asparagine 505. A helical transmembrane segment spans residues 545–565 (VWFIFLVALLFNLLVILTVFA). Residues 566–575 (SCSSLPASKL) lie on the Cytoplasmic side of the membrane. Residues 576–596 (FIGLISVSNLLMGIYTGILTF) form a helical membrane-spanning segment. Residues 597–619 (LDAVSWGRFAEFGIWWETGSGCK) are Extracellular-facing. A disulfide bridge connects residues cysteine 618 and cysteine 693. A helical membrane pass occupies residues 620 to 640 (VAGSLAVFSSESAVFLLTLAA). The Cytoplasmic portion of the chain corresponds to 641-661 (VERSVFAKDLMKHGKSSHLRQ). The chain crosses the membrane as a helical span at residues 662–682 (FQVAALLALLGAAVAGCFPLF). The Extracellular segment spans residues 683 to 703 (HGGQYSASPLCLPFPTGETPS). Residues 704–724 (LGFTVTLVLLNSLAFLLMAII) form a helical membrane-spanning segment. The Cytoplasmic segment spans residues 725 to 756 (YTKLYCNLEKEDLSENSQSSVIKHVAWLIFTN). A helical transmembrane segment spans residues 757-777 (CIFFCPVAFFSFAPLITAISI). At 778 to 783 (SPEIMK) the chain is on the extracellular side. A helical membrane pass occupies residues 784 to 804 (SVTLIFFPLPACLNPVLYVFF). The Cytoplasmic segment spans residues 805-951 (NPKFKEDWKL…YAYNLQRVRD (147 aa)). At serine 920 the chain carries Phosphoserine.

Belongs to the G-protein coupled receptor 1 family.

The protein resides in the cell membrane. In terms of biological role, receptor for R-spondins that potentiates the canonical Wnt signaling pathway and is involved in the formation of various organs. Upon binding to R-spondins (RSPO1, RSPO2, RSPO3 or RSPO4), associates with phosphorylated LRP6 and frizzled receptors that are activated by extracellular Wnt receptors, triggering the canonical Wnt signaling pathway to increase expression of target genes. In contrast to classical G-protein coupled receptors, does not activate heterotrimeric G-proteins to transduce the signal. Its function as activator of the Wnt signaling pathway is required for the development of various organs, including liver, kidney, intestine, bone, reproductive tract and eye. May also act as a receptor for norrin (NDP), such results however require additional confirmation in vivo. Required during spermatogenesis to activate the Wnt signaling pathway in peritubular myoid cells. Required for the maintenance of intestinal stem cells and Paneth cell differentiation in postnatal intestinal crypts. Acts as a regulator of bone formation and remodeling. Involved in kidney development; required for maintaining the ureteric bud in an undifferentiated state. Involved in the development of the anterior segment of the eye. Required during erythropoiesis. Also acts as a negative regulator of innate immunity by inhibiting TLR2/TLR4 associated pattern-recognition and pro-inflammatory cytokine production. Plays an important role in regulating the circadian rhythms of plasma lipids, partially through regulating the rhythmic expression of MTTP. Required for proper development of GnRH neurons (gonadotropin-releasing hormone expressing neurons) that control the release of reproductive hormones from the pituitary gland. This Rattus norvegicus (Rat) protein is Leucine-rich repeat-containing G-protein coupled receptor 4 (Lgr4).